A 642-amino-acid chain; its full sequence is Threonine--tRNA ligase (642 aa).

One can recognise a TGS domain in the interval 1–61 (MPVITLPDGS…DTDAQLAIIT (61 aa)). Positions 243-534 (DHRKIGKQLD…LTEEFAGFFP (292 aa)) are catalytic. Zn(2+)-binding residues include C334, H385, and H511.

The protein belongs to the class-II aminoacyl-tRNA synthetase family. In terms of assembly, homodimer. Zn(2+) serves as cofactor.

It localises to the cytoplasm. The catalysed reaction is tRNA(Thr) + L-threonine + ATP = L-threonyl-tRNA(Thr) + AMP + diphosphate + H(+). Catalyzes the attachment of threonine to tRNA(Thr) in a two-step reaction: L-threonine is first activated by ATP to form Thr-AMP and then transferred to the acceptor end of tRNA(Thr). Also edits incorrectly charged L-seryl-tRNA(Thr). In Pectobacterium atrosepticum (strain SCRI 1043 / ATCC BAA-672) (Erwinia carotovora subsp. atroseptica), this protein is Threonine--tRNA ligase.